An 88-amino-acid chain; its full sequence is Alkene monooxygenase system, oxygenase component subunit gamma (88 aa).

The protein belongs to the TmoB/XamoB family. As to quaternary structure, the alkene monooxygenase multicomponent enzyme system is composed of an electron transfer component and a monooxygenase component interacting with the effector protein XamoD. The electron transfer component is composed of a ferredoxin reductase (XamoF) and a ferredoxin (XamoC), and the monooxygenase component is formed by a heterohexamer (dimer of heterotrimers) of two alpha subunits (XamoA), two beta subunits (XamoE) and two gamma subunits (XamoB).

Its subcellular location is the cytoplasm. The catalysed reaction is propene + NADH + O2 + H(+) = 1,2-epoxypropane + NAD(+) + H2O. Inhibited by propyne. In terms of biological role, component of the alkene monooxygenase multicomponent enzyme system which catalyzes the O2- and NADH-dependent epoxidation of short chain (C2 to C6) alkenes to their corresponding epoxides. Also able to catalyze the oxidation of a number of chlorinated alkenes, including trichloroethylene, cis- and trans-1,2-dichloroethylene, vinyl chloride, 1-chloropropylene, 1,3-dichloropropylene and 2,3-dichloropropylene. The chain is Alkene monooxygenase system, oxygenase component subunit gamma from Xanthobacter autotrophicus (strain ATCC BAA-1158 / Py2).